The primary structure comprises 410 residues: Elongation factor Tu, chloroplastic (410 aa).

A tr-type G domain is found at 10 to 215 (KPHINIGTIG…MVDKYFPTPE (206 aa)). The tract at residues 19 to 26 (GHVDHGKT) is G1. 19–26 (GHVDHGKT) lines the GTP pocket. Threonine 26 contacts Mg(2+). The tract at residues 61-65 (GITIN) is G2. Residues 82-85 (DCPG) are G3. Residues 82–86 (DCPGH) and 137–140 (NKAD) each bind GTP. The G4 stretch occupies residues 137–140 (NKAD). The interval 175-177 (SAL) is G5.

Belongs to the TRAFAC class translation factor GTPase superfamily. Classic translation factor GTPase family. EF-Tu/EF-1A subfamily.

It localises to the plastid. It is found in the chloroplast. The enzyme catalyses GTP + H2O = GDP + phosphate + H(+). In terms of biological role, GTP hydrolase that promotes the GTP-dependent binding of aminoacyl-tRNA to the A-site of ribosomes during protein biosynthesis. In Cyanidium caldarium (Red alga), this protein is Elongation factor Tu, chloroplastic (tufA).